Reading from the N-terminus, the 750-residue chain is Photosystem I P700 chlorophyll a apoprotein A1 (750 aa).

Transmembrane regions (helical) follow at residues 70–93 (VFSAHFGQLSIIFLWLSGMYFHGA), 156–179 (LYCTAIGALVFAALMLFAGWFHYH), 195–219 (LNHHLAGLLGLGSLSWAGHQVHVSL), 291–309 (IAHHHLAIAILFLIAGHMY), 346–369 (WHAQLSLNLAMLGSLTIVVAHHMY), 385–411 (LSLFTHHMWIGGFLIVGAAAHAAIFMV), 433–455 (AIISHLNWVCIFLGFHSFGLYIH), and 531–549 (FLVHHIHAFTIHVTVLILL). [4Fe-4S] cluster-binding residues include cysteine 573 and cysteine 582. Helical transmembrane passes span 589 to 610 (HVFLGLFWMYNAISVVIFHFSW) and 664 to 686 (LSAYGLFFLGAHFVWAFSLMFLF). Histidine 675 contacts chlorophyll a'. Chlorophyll a is bound by residues methionine 683 and tyrosine 691. A phylloquinone-binding site is contributed by tryptophan 692. The helical transmembrane segment at 724–744 (AVGVTHYLLGGIATTWAFFLA) threads the bilayer.

It belongs to the PsaA/PsaB family. As to quaternary structure, the PsaA/B heterodimer binds the P700 chlorophyll special pair and subsequent electron acceptors. PSI consists of a core antenna complex that captures photons, and an electron transfer chain that converts photonic excitation into a charge separation. The eukaryotic PSI reaction center is composed of at least 11 subunits. Requires P700 is a chlorophyll a/chlorophyll a' dimer, A0 is one or more chlorophyll a, A1 is one or both phylloquinones and FX is a shared 4Fe-4S iron-sulfur center. as cofactor.

It is found in the plastid. Its subcellular location is the chloroplast thylakoid membrane. It carries out the reaction reduced [plastocyanin] + hnu + oxidized [2Fe-2S]-[ferredoxin] = oxidized [plastocyanin] + reduced [2Fe-2S]-[ferredoxin]. In terms of biological role, psaA and PsaB bind P700, the primary electron donor of photosystem I (PSI), as well as the electron acceptors A0, A1 and FX. PSI is a plastocyanin-ferredoxin oxidoreductase, converting photonic excitation into a charge separation, which transfers an electron from the donor P700 chlorophyll pair to the spectroscopically characterized acceptors A0, A1, FX, FA and FB in turn. Oxidized P700 is reduced on the lumenal side of the thylakoid membrane by plastocyanin. This Draba nemorosa (Woodland whitlowgrass) protein is Photosystem I P700 chlorophyll a apoprotein A1.